The sequence spans 238 residues: SPbeta prophage-derived uncharacterized protein YorM (238 aa).

Positions 1–37 are cleaved as a signal peptide; it reads MFKKLIDKHKKYVYHRINKMALFATIGLLGVGLVYSA. A compositionally biased stretch (basic residues) spans 111–121; sequence TKTKKVQKTNT. Positions 111–132 are disordered; it reads TKTKKVQKTNTKRNLDKAVSKS.

This chain is SPbeta prophage-derived uncharacterized protein YorM (yorM), found in Bacillus subtilis (strain 168).